The primary structure comprises 475 residues: Ribulose bisphosphate carboxylase large chain (475 aa).

Positions 1-2 are excised as a propeptide; it reads MS. N-acetylproline is present on P3. K14 carries the N6,N6,N6-trimethyllysine modification. Positions 123 and 173 each coordinate substrate. Residue K175 is the Proton acceptor of the active site. K177 is a substrate binding site. Mg(2+)-binding residues include K201, D203, and E204. The residue at position 201 (K201) is an N6-carboxylysine. H294 acts as the Proton acceptor in catalysis. Substrate is bound by residues R295, H327, and S379.

This sequence belongs to the RuBisCO large chain family. Type I subfamily. In terms of assembly, heterohexadecamer of 8 large chains and 8 small chains; disulfide-linked. The disulfide link is formed within the large subunit homodimers. It depends on Mg(2+) as a cofactor. The disulfide bond which can form in the large chain dimeric partners within the hexadecamer appears to be associated with oxidative stress and protein turnover.

It is found in the plastid. The protein resides in the chloroplast. It catalyses the reaction 2 (2R)-3-phosphoglycerate + 2 H(+) = D-ribulose 1,5-bisphosphate + CO2 + H2O. The enzyme catalyses D-ribulose 1,5-bisphosphate + O2 = 2-phosphoglycolate + (2R)-3-phosphoglycerate + 2 H(+). Functionally, ruBisCO catalyzes two reactions: the carboxylation of D-ribulose 1,5-bisphosphate, the primary event in carbon dioxide fixation, as well as the oxidative fragmentation of the pentose substrate in the photorespiration process. Both reactions occur simultaneously and in competition at the same active site. This Pinus krempfii (Krempf's pine) protein is Ribulose bisphosphate carboxylase large chain.